A 1902-amino-acid chain; its full sequence is Plexin-B3 (1902 aa).

An N-terminal signal peptide occupies residues 1-34 (MLTDFLQAPVMAPWSPFSLHLLLLFLLLLPLTRA). A Sema domain is found at 35-461 (HRFSVPNASF…TAQQVDRILV (427 aa)). The Extracellular portion of the chain corresponds to 35–1245 (HRFSVPNASF…MISTFPVEAQ (1211 aa)). N41 carries N-linked (GlcNAc...) asparagine glycosylation. Intrachain disulfides connect C88–C97 and C122–C130. N221 carries an N-linked (GlcNAc...) asparagine glycan. 3 disulfides stabilise this stretch: C257–C360, C273–C305, and C323–C347. The segment at 353 to 372 (DSPESYPCGDEHTPSPIAGR) is disordered. N-linked (GlcNAc...) asparagine glycans are attached at residues N416 and N469. The region spanning 463–515 (ACPQFPNCTTCLQARDPLCGWCILQGRCTRRAECGRAVQPNQWLWSYEDNHCL) is the PSI 1 domain. Cystine bridges form between C464-C481, C470-C514, C473-C490, C484-C496, and C551-C569. PSI domains follow at residues 609-671 (DCSA…EACP) and 776-822 (DCAM…QLCP). N791, N889, N946, N1090, and N1207 each carry an N-linked (GlcNAc...) asparagine glycan. IPT/TIG domains follow at residues 824–913 (PSID…HFTY), 915–1001 (DPVL…FRYT), and 1003–1134 (NPQL…FLYQ). Residues 1246–1266 (VGLGMGAAMLIAAVLLLTLMY) form a helical membrane-spanning segment. At 1267–1902 (RHKSKQALRD…ALVEYKVTDL (636 aa)) the chain is on the cytoplasmic side.

It belongs to the plexin family. Binds MET and MST1R. Interacts with RIT2/RIN. Interacts (via cytoplasmic domain) with FSCN1 and RAC1. May form homodimers (via Sema domain). Interacts (via cytoplasmic domain) with ARHGDIA. As to expression, expressed in glioma cells (at protein level). Expressed in glioma cells and oligodendrocyte precursor cells.

It is found in the cell membrane. Receptor for SEMA5A that plays a role in axon guidance, invasive growth and cell migration. Stimulates neurite outgrowth and mediates Ca(2+)/Mg(2+)-dependent cell aggregation. In glioma cells, SEMA5A stimulation of PLXNB3 results in the disassembly of F-actin stress fibers, disruption of focal adhesions and cellular collapse as well as inhibition of cell migration and invasion through ARHGDIA-mediated inactivation of RAC1. This Rattus norvegicus (Rat) protein is Plexin-B3 (Plxnb3).